The following is a 1502-amino-acid chain: MNDSTQILDESGDFSFLSLNENKSRSRSTSTCSINSVEIIDGGSCDSSGDDDKNNSYLDEEKKRILRKTYLYFNANNKKTQLNFIIDNQVLDWIFNQTKTKISKPICESLKNGVALCKIINLIKPNTIKKINLNSSIFSYRENLTNFTKGCESIGMTEDMSRFQELVFEDKESAVLQLLYSLMKFSEKILPNTISTSPPSQLNICKSPVLLKKAAAQSSSSSPTTSTSASTSTSTSPSSSNESIAKPILSALSSSSSTLFSAAPTPTSTNTVPYKFIGHSKSKLFGQQQQQQQQQQQQQQQQQQQQQQQQQQQQQQQQQQQQQQQQQQPPPQTSTCTTTQPTTTTTEEHKLAPPPPLIVPNTSSLPPPQPTTSSIIKKAAPAPLKKPSPANTSSNSLLNHLPPPPSSSSTASSAINTPISTPSTSKSNSFQKPNNNFQKPIQIAHVEPIIEENEIEDNTNNNNNNNNNNNNNNNNNNNNNNNNNNNNNNNNTNDNINNNNKNNNNNQNENEDEVKPVHSPPKVRPPLPSRVGRGQLLRSSSEEIQFDIENASVSEAPSPVMTMNEDYSIVTDANSLTNHYNGANEYTTTTTAATTNLPNESSSRSNSASSNGDQNNNNNNNNNNNNNNNNNNNNNNNNNNNNNNNNLQLPAKINSEPNNQYNTISTSSPSTTGTILESPNGSSIFSQPLNNNNNINNENNNSNNSNSLVTSSSPPLSLPAYSANGSPNCPQGKKQRSGTKLRSFFGVKSKPESKSVSNFYGVGNSINQPPSNSSPKQSPVPNNPPSVSQSFLNLSMNSKSSKKKKDNISPDINSNSNNNNNNNNNNNNNNNNNNNNNNNNNNNNNNNNNNNNNLEEDENPLTMSNQSANSLKSSGNHFEDDITNGNNNISQNQNQNQNQNQNQTQNQNQNQNQNHISHSNSISSGNLNNHVNQNNNVNEESVDSELMKALSKVEFLFKDRKVLKERINFTYPEKYLKFFVNMDELIQIDNSTTFLTESLLSKRPSQQLELCHQEERRFLSEIVTLQNVLNVVEENKNLITRTEEMQKMIDSLMKEKKELINEKNTLASMLAKTKQQQQQQSNDTVSQRKMVDDGIVYNYNHGKYEIKGGTTEKLIELLYNSEFIGSDYFETFLLTYRSFASPKRVMDVLTKTYNENYSVEGNATDDVEKRLELDQFNKQRKDTHLKICNFLKRWVEKHFYDFDQDLLQEFNTFIANCRVINHQDFLQKTLNKKLIPLSSSELKLVFSTPTPAPILPKTPITCFEDMDPAEIARQLTLIEFNLFKNIANKEFLSLSWQKQDKEKRSPNLLKMIYRFNEVSNWVTSTIVKETTNIKKRASYLKRFIKLAEELRKLNNFNGVFVIVSGLHSASVNRLKNTWAEISKQQQKQFEEFVALTSPQSSFASYRLELRQSTGASIPYLGVHLSDLTFVEEGNQDKLENGYTNFSKCRLIAEQIKAIQEFQQEPYNLREVEEMIPFITHKAVPESECFNLSLICEPRESVN.

Positions 84–187 (FIIDNQVLDW…LLYSLMKFSE (104 aa)) constitute a Calponin-homology (CH) domain. Disordered stretches follow at residues 216-242 (AQSS…SSNE), 325-436 (QQQQ…PNNN), 456-534 (EDNT…VGRG), and 589-935 (TTTA…NQNN). Low complexity-rich tracts occupy residues 218–242 (SSSS…SSNE), 325–345 (QQQQ…TTTT), 371–400 (TTSS…LLNH), and 407–421 (SSST…PIST). The stretch at 287 to 328 (QQQQQQQQQQQQQQQQQQQQQQQQQQQQQQQQQQQQQQQQQQ) forms a coiled coil. Residues 422 to 436 (PSTSKSNSFQKPNNN) show a composition bias toward polar residues. A coiled-coil region spans residues 451–515 (EENEIEDNTN…NQNENEDEVK (65 aa)). Low complexity predominate over residues 458–508 (NTNNNNNNNNNNNNNNNNNNNNNNNNNNNNNNNNTNDNINNNNKNNNNNQN). The span at 518-528 (HSPPKVRPPLP) shows a compositional bias: pro residues. Low complexity-rich tracts occupy residues 589 to 646 (TTTA…NNNN), 663 to 675 (TIST…TGTI), 686 to 719 (SQPL…LSLP), 764 to 790 (NSIN…VSQS), and 813 to 853 (NSNS…NNNN). The segment covering 861 to 876 (LTMSNQSANSLKSSGN) has biased composition (polar residues). The segment covering 883–935 (TNGNNNISQNQNQNQNQNQNQTQNQNQNQNQNHISHSNSISSGNLNNHVNQNN) has biased composition (low complexity). Positions 1032-1076 (VEENKNLITRTEEMQKMIDSLMKEKKELINEKNTLASMLAKTKQQ) form a coiled coil. An N-terminal Ras-GEF domain is found at 1102–1249 (GKYEIKGGTT…SELKLVFSTP (148 aa)). One can recognise a Ras-GEF domain in the interval 1267-1498 (DPAEIARQLT…FNLSLICEPR (232 aa)).

Promotes the exchange of Ras-bound GDP by GTP. The protein is Ras guanine nucleotide exchange factor P (gefP) of Dictyostelium discoideum (Social amoeba).